The following is a 222-amino-acid chain: MLTRLFVTGTDTAVGKTVVSRALLQALSQNGRTAVGYKPVATESKETSEGLRNQDALILQASSSIELNYQEVNPYPLQGDVIHACTDTLINYEKMTEGLQCLSAKADTVIVEGCGGWKVMMNDQRFYSDWVVQEQLPVILVVGIKLGCINHALLTAQAIINDGLPLLGWVANRINPGLAHYAETIAMLRDRLAAPQLGQLPYLPRPEEKPLAKYLDLTAISG.

Thr-17 serves as a coordination point for Mg(2+). The active site involves Lys-38. Thr-42 serves as a coordination point for substrate. Mg(2+) contacts are provided by Asp-55 and Glu-112. Residues Asp-55, 112–115 (EGCG), 172–173 (NR), 201–203 (PYL), and Glu-208 each bind ATP.

This sequence belongs to the dethiobiotin synthetase family. As to quaternary structure, homodimer. The cofactor is Mg(2+).

It is found in the cytoplasm. It catalyses the reaction (7R,8S)-7,8-diammoniononanoate + CO2 + ATP = (4R,5S)-dethiobiotin + ADP + phosphate + 3 H(+). It functions in the pathway cofactor biosynthesis; biotin biosynthesis; biotin from 7,8-diaminononanoate: step 1/2. Its function is as follows. Catalyzes a mechanistically unusual reaction, the ATP-dependent insertion of CO2 between the N7 and N8 nitrogen atoms of 7,8-diaminopelargonic acid (DAPA, also called 7,8-diammoniononanoate) to form a ureido ring. This chain is ATP-dependent dethiobiotin synthetase BioD 2, found in Yersinia pestis.